A 267-amino-acid chain; its full sequence is Tryptophan synthase alpha chain (267 aa).

Residues glutamate 49 and aspartate 60 each act as proton acceptor in the active site.

Belongs to the TrpA family. In terms of assembly, tetramer of two alpha and two beta chains.

It catalyses the reaction (1S,2R)-1-C-(indol-3-yl)glycerol 3-phosphate + L-serine = D-glyceraldehyde 3-phosphate + L-tryptophan + H2O. It participates in amino-acid biosynthesis; L-tryptophan biosynthesis; L-tryptophan from chorismate: step 5/5. Functionally, the alpha subunit is responsible for the aldol cleavage of indoleglycerol phosphate to indole and glyceraldehyde 3-phosphate. The polypeptide is Tryptophan synthase alpha chain (Carboxydothermus hydrogenoformans (strain ATCC BAA-161 / DSM 6008 / Z-2901)).